Here is a 285-residue protein sequence, read N- to C-terminus: Homeobox protein Hox-A4 (285 aa).

2 disordered regions span residues 19–70 (PFEE…APRA) and 94–130 (ASPGRPEQSPAPGAHPSPAPQPPVPLGHCAPGPTTPA). Over residues 27 to 41 (GGPGGGDGAVGGGPG) the composition is skewed to gly residues. Over residues 44–70 (RPQSAPHLPAPNPHAARQPPAYYAPRA) the composition is skewed to low complexity. Residues 106 to 118 (GAHPSPAPQPPVP) show a composition bias toward pro residues. The short motif at 159 to 164 (VYPWMK) is the Antp-type hexapeptide element. The homeobox DNA-binding region spans 180–239 (PKRSRTAYTRQQVLELEKEFHFNRYLTRRRRIEIAHTLCLSERQVKIWFQNRRMKWKKDH). Positions 238 to 285 (DHKLPNTKMRSSNTASAPAGPPGKAQTHSPHHHPHPLPGASTPIPSSI) are disordered.

It belongs to the Antp homeobox family. Deformed subfamily.

The protein resides in the nucleus. Sequence-specific transcription factor which is part of a developmental regulatory system that provides cells with specific positional identities on the anterior-posterior axis. Binds to sites in the 5'-flanking sequence of its coding region with various affinities. The consensus sequences of the high and low affinity binding sites are 5'-TAATGA[CG]-3' and 5'-CTAATTTT-3'. This chain is Homeobox protein Hox-A4 (Hoxa4), found in Mus musculus (Mouse).